Here is a 339-residue protein sequence, read N- to C-terminus: Lipoyl synthase (339 aa).

Positions 13 to 35 (RPKLDAPARPRHPEKAHRPDTAI) are disordered. The [4Fe-4S] cluster site is built by cysteine 68, cysteine 73, cysteine 79, cysteine 94, cysteine 98, cysteine 101, and serine 307. The Radical SAM core domain maps to 80-296 (WEKRHATFMI…ETTAYAKGFL (217 aa)).

The protein belongs to the radical SAM superfamily. Lipoyl synthase family. [4Fe-4S] cluster is required as a cofactor.

Its subcellular location is the cytoplasm. The catalysed reaction is [[Fe-S] cluster scaffold protein carrying a second [4Fe-4S](2+) cluster] + N(6)-octanoyl-L-lysyl-[protein] + 2 oxidized [2Fe-2S]-[ferredoxin] + 2 S-adenosyl-L-methionine + 4 H(+) = [[Fe-S] cluster scaffold protein] + N(6)-[(R)-dihydrolipoyl]-L-lysyl-[protein] + 4 Fe(3+) + 2 hydrogen sulfide + 2 5'-deoxyadenosine + 2 L-methionine + 2 reduced [2Fe-2S]-[ferredoxin]. Its pathway is protein modification; protein lipoylation via endogenous pathway; protein N(6)-(lipoyl)lysine from octanoyl-[acyl-carrier-protein]: step 2/2. Its function is as follows. Catalyzes the radical-mediated insertion of two sulfur atoms into the C-6 and C-8 positions of the octanoyl moiety bound to the lipoyl domains of lipoate-dependent enzymes, thereby converting the octanoylated domains into lipoylated derivatives. This Methylorubrum extorquens (strain PA1) (Methylobacterium extorquens) protein is Lipoyl synthase.